A 449-amino-acid chain; its full sequence is Mycosin-1 (449 aa).

The N-terminal stretch at 1–23 (MQRVAVMVLAVLLALFSAPPAWA) is a signal peptide. Residues Cys-51 and Cys-120 are joined by a disulfide bond. The Peptidase S8 domain occupies 66–389 (PWANDYLRIQ…AGVIDPVAAL (324 aa)). Active-site charge relay system residues include Asp-92 and His-123. Disordered regions lie at residues 160–179 (FQPKGARQDPNDPNTTQTAG) and 240–259 (TGQDCSQNPPPDPSVPSDPR). Residues 170-179 (NDPNTTQTAG) are compositionally biased toward polar residues. Cys-206 and Cys-244 are joined by a disulfide. The active-site Charge relay system is the Ser-334. A helical transmembrane segment spans residues 421–441 (ITAVVIAGATLAFALGIGALA).

The protein belongs to the peptidase S8 family.

The protein localises to the cell membrane. Its function is as follows. May play a dual role in regulation of ESX-1 secretion and virulence. Acts as a protease that cleaves EspB. This chain is Mycosin-1, found in Mycolicibacterium smegmatis (strain ATCC 700084 / mc(2)155) (Mycobacterium smegmatis).